A 424-amino-acid polypeptide reads, in one-letter code: Histidine--tRNA ligase (424 aa).

The protein belongs to the class-II aminoacyl-tRNA synthetase family. As to quaternary structure, homodimer.

Its subcellular location is the cytoplasm. It carries out the reaction tRNA(His) + L-histidine + ATP = L-histidyl-tRNA(His) + AMP + diphosphate + H(+). The protein is Histidine--tRNA ligase of Bacillus velezensis (strain DSM 23117 / BGSC 10A6 / LMG 26770 / FZB42) (Bacillus amyloliquefaciens subsp. plantarum).